A 382-amino-acid chain; its full sequence is tRNA (guanine-N(7)-)-methyltransferase non-catalytic subunit wuho (382 aa).

Positions 40–59 are disordered; sequence VKDTDAGNEPNGNQTQPTPA. Residues 49–59 show a composition bias toward polar residues; that stretch reads PNGNQTQPTPA. WD repeat units follow at residues 149 to 190 and 192 to 230; these read GHMS…ECFC and GHTEYVGGIEIIPSEKLISVSGDRTLRLWDVTEGKELSK.

The protein belongs to the WD repeat TRM82 family. In terms of assembly, forms a heterodimer with the catalytic subunit.

The protein localises to the nucleus. It participates in tRNA modification; N(7)-methylguanine-tRNA biosynthesis. Required for the formation of N(7)-methylguanine at position 46 (m7G46) in tRNA. In the complex, it is required to stabilize and induce conformational changes of the catalytic subunit. The sequence is that of tRNA (guanine-N(7)-)-methyltransferase non-catalytic subunit wuho from Anopheles gambiae (African malaria mosquito).